Reading from the N-terminus, the 341-residue chain is D-aspartate oxidase (341 aa).

FAD is bound by residues aspartate 36, lysine 37, threonine 43, serine 44, methionine 50, glycine 307, isoleucine 311, and serine 312. Residues 339–341 (SNL) carry the Microbody targeting signal motif.

This sequence belongs to the DAMOX/DASOX family. Monomer. Interacts with PEX5; the interaction is direct and required for localization of DDO to the peroxisome. Interacts with DAOA; the interaction is direct and increases the degradation rate of DDO. FAD serves as cofactor. In terms of processing, may be S-nitrosylated. As to expression, expressed in epithelial cells of the proximal nephron tubules in the renal cortex (at protein level). In the brain, expressed in the frontal, temporal, and occipital lobes of the cortex, hippocampus, striatum, diencephalon, brainstem, cerebellum, spinal cord, plexus choroiderus and ependyma (at protein level). Expression is increased in the prefrontal cortex of schizophrenic patients. Levels are normal in the superior frontal gyrus of patients with Alzheimer's disease.

Its subcellular location is the peroxisome matrix. It localises to the cytoplasm. It is found in the cytosol. The enzyme catalyses D-aspartate + O2 + H2O = oxaloacetate + H2O2 + NH4(+). It carries out the reaction D-glutamate + O2 + H2O = H2O2 + 2-oxoglutarate + NH4(+). Inhibited by the benzodiazepine olanzapine. Inhibited by aminooxyacetic acid, thiolactomycin, malonate and meso-tartrate. Clozapine, haloperidol and chlorpromazine have no effect on activity. Not inhibited by sodium, potassium, magnesium, iron, calcium, cobalt, copper, nickel, manganese or zinc ions. Not inhibited by AMP, ADP, ATP, or cAMP. Not inhibited by pyridoxal 5'-phosphate. Selectively catalyzes the oxidative deamination of acidic amino acids. Suppresses the level of D-aspartate in the brain, an amino acid that can act as an agonist for glutamate receptors. Protects the organism from the toxicity of D-amino acids. May also function in the intestine. In Homo sapiens (Human), this protein is D-aspartate oxidase (DDO).